A 343-amino-acid polypeptide reads, in one-letter code: Putative ALA-interacting subunit 2 (343 aa).

Residues 43-63 (PISVITVFMLMGFVFIPIGLI) traverse the membrane as a helical segment. N-linked (GlcNAc...) asparagine glycans are attached at residues N103, N178, N191, and N218. Residues 301 to 321 (FLGITYLVVGSSSIVISIIFM) traverse the membrane as a helical segment.

The protein belongs to the CDC50/LEM3 family. Expressed in roots, leaves, stems, flowers and siliques.

It localises to the membrane. The polypeptide is Putative ALA-interacting subunit 2 (ALIS2) (Arabidopsis thaliana (Mouse-ear cress)).